A 126-amino-acid chain; its full sequence is RuBisCO chaperone RbcX (126 aa).

This sequence belongs to the RbcX family. As to quaternary structure, homodimer. Interacts with the exposed C-terminal peptide of RbcL via its central cleft, contacts a second RbcL monomer via its peripheral polar surface.

The protein resides in the carboxysome. The protein localises to the cytoplasm. In terms of biological role, an RbcL-specific chaperone. Required for assembly of the RbcL8 core. The central cleft of the RbcX homodimer (RbcX2) binds the C-terminus of a RbcL monomer, stabilizing the C-terminus and probably preventing its reassociation with chaperonin GroEL-ES. At the same time the peripheral region of RbcX2 binds a second RbcL monomer, bridging the RbcL homodimers in the correct orientation. The RbcX2(2)-bound RbcL dimers then assemble into the RbcL8 core (RbcL8-(RbcX2)8). RbcS binding triggers the release of RbcX2. The chain is RuBisCO chaperone RbcX from Thermosynechococcus vestitus (strain NIES-2133 / IAM M-273 / BP-1).